The following is a 290-amino-acid chain: UPF0761 membrane protein CKO_03126 (290 aa).

The next 6 helical transmembrane spans lie at 44–64 (LLSL…FPMF), 104–124 (VGAC…DSAL), 140–160 (FAVY…SLAI), 183–203 (VFPL…VPTT), 210–230 (AVVG…GFAL), and 244–264 (VLAV…IVLL).

Belongs to the UPF0761 family.

Its subcellular location is the cell inner membrane. This Citrobacter koseri (strain ATCC BAA-895 / CDC 4225-83 / SGSC4696) protein is UPF0761 membrane protein CKO_03126.